A 167-amino-acid polypeptide reads, in one-letter code: U-scoloptoxin(08)-Er5b (167 aa).

The first 22 residues, 1 to 22 (MKTNCEFPLLCLLIVLVANVEG), serve as a signal peptide directing secretion. Positions 23–94 (EVEDTGLKMV…KRLWRNWERR (72 aa)) are excised as a propeptide. RLWRNWE repeat units lie at residues 34–40 (RLWRNWE), 61–67 (RLWRNWE), and 86–92 (RLWRNWE). Gln-95 bears the Pyrrolidone carboxylic acid mark. The stretch at 107 to 113 (ELWRNWE) is one RLWRNWE 4; approximate repeat. A propeptide spanning residues 112 to 118 (WEDLKRR) is cleaved from the precursor. A Pyrrolidone carboxylic acid modification is found at Gln-119. One copy of the RLWRNWE 5 repeat lies at 134-140 (RLWRNWE). A propeptide spanning residues 139–167 (WEDNHATLRKRSADSLSRQKRLGKERGKE) is cleaved from the precursor. Residues 147-167 (RKRSADSLSRQKRLGKERGKE) are disordered.

The protein belongs to the scoloptoxin-08 family. As to expression, expressed by the venom gland.

The protein localises to the secreted. The sequence is that of U-scoloptoxin(08)-Er5b from Ethmostigmus rubripes (Giant centipede).